We begin with the raw amino-acid sequence, 962 residues long: Synphilin-1 (962 aa).

Disordered stretches follow at residues 80 to 99 (SPLK…DQKN), 104 to 137 (YQKG…EPSQ), and 222 to 249 (TALR…PAYE). ANK repeat units lie at residues 348-379 (NGNN…CLNE), 383-412 (EQLT…AIAE), 418-447 (DFPS…EQGI), and 455-484 (EGNS…NVTM). A coiled-coil region spans residues 522–548 (VKLTKQLKEQTVERVTLQSQLQQLLEA). The segment at 548–590 (AQKSEGKSLPSSPSSPSSPASTKSQWKALDTDEESTGKSKVGA) is disordered. Low complexity predominate over residues 554–571 (KSLPSSPSSPSSPASTKS). The ANK 5 repeat unit spans residues 602-631 (VSSRARTKGKDEDSDKILRQLLGKEISENV). Low complexity predominate over residues 667-684 (RQLMQRSLSESDTDSNNS). The disordered stretch occupies residues 667–852 (RQLMQRSLSE…QRTSESGEQM (186 aa)). Residues 685–699 (EDPKNTPVKRADRPR) are compositionally biased toward basic and acidic residues. An ANK 6 repeat occupies 698 to 728 (PRPQPIVESVENVDSAESLHLMIKKHSLASG). Residues 772–790 (PSTEATQSSPDSTAAQKVA) show a composition bias toward polar residues. Positions 831–840 (NGEKDKDKGR) are enriched in basic and acidic residues.

As to quaternary structure, associates with SNCA, RNF19A and PRKN. Post-translationally, ubiquitinated; mediated by SIAH1 or RNF19A and leading to its subsequent proteasomal degradation.

This is Synphilin-1 (Sncaip) from Mus musculus (Mouse).